The chain runs to 390 residues: Pepsin B (390 aa).

A signal peptide spans 1 to 16 (MKIQVLVLVCLHLSEG). The propeptide at 17–59 (VERIILKKGKSIRQVMEERGVLETFLRNHPKVDPAAKYLFNND) is activation peptide. The region spanning 74-387 (YFGEISIGTP…DMAANRVGFA (314 aa)) is the Peptidase A1 domain. Asp92 is an active-site residue. 2 disulfides stabilise this stretch: Cys105–Cys110 and Cys269–Cys273. Asp278 is an active-site residue. A disulfide bridge connects residues Cys312 and Cys345.

It belongs to the peptidase A1 family.

It is found in the secreted. The catalysed reaction is Degradation of gelatin, little activity on hemoglobin. Specificity on B chain of insulin more restricted than that of pepsin A. Does not cleave 1-Phe-|-Val-2, 4-Gln-|-His-5 or 23-Gly-|-Phe-24.. Functionally, hydrolyzes various peptides including beta-endorphin, insulin B chain, dynorphin A, and neurokinin A, with high specificity for the cleavage of the Phe-Xaa bonds. The protein is Pepsin B (PGB) of Canis lupus familiaris (Dog).